Here is a 226-residue protein sequence, read N- to C-terminus: UPF0758 protein Daro_3142 (226 aa).

The MPN domain maps to 103–226 (SFTSPGKVRD…PLSFAERGLL (124 aa)). 3 residues coordinate Zn(2+): H174, H176, and D187. The JAMM motif signature appears at 174–187 (HNHPSGIAEPSRAD).

The protein belongs to the UPF0758 family.

The sequence is that of UPF0758 protein Daro_3142 from Dechloromonas aromatica (strain RCB).